We begin with the raw amino-acid sequence, 340 residues long: Ketol-acid reductoisomerase (NADP(+)) (340 aa).

Residues 3–182 enclose the KARI N-terminal Rossmann domain; sequence VQMEYEKDVK…GAARVGLLET (180 aa). NADP(+) contacts are provided by residues 26-29, Arg49, Ser53, and 83-86; these read YGSQ and DEIQ. Residue His108 is part of the active site. Position 134 (Gly134) interacts with NADP(+). Residues 183-328 form the KARI C-terminal knotted domain; sequence TYKEETEEDL…AELRKAMPFV (146 aa). 4 residues coordinate Mg(2+): Asp191, Glu195, Glu227, and Glu231. Ser252 serves as a coordination point for substrate.

Belongs to the ketol-acid reductoisomerase family. The cofactor is Mg(2+).

The enzyme catalyses (2R)-2,3-dihydroxy-3-methylbutanoate + NADP(+) = (2S)-2-acetolactate + NADPH + H(+). It catalyses the reaction (2R,3R)-2,3-dihydroxy-3-methylpentanoate + NADP(+) = (S)-2-ethyl-2-hydroxy-3-oxobutanoate + NADPH + H(+). It functions in the pathway amino-acid biosynthesis; L-isoleucine biosynthesis; L-isoleucine from 2-oxobutanoate: step 2/4. The protein operates within amino-acid biosynthesis; L-valine biosynthesis; L-valine from pyruvate: step 2/4. Its function is as follows. Involved in the biosynthesis of branched-chain amino acids (BCAA). Catalyzes an alkyl-migration followed by a ketol-acid reduction of (S)-2-acetolactate (S2AL) to yield (R)-2,3-dihydroxy-isovalerate. In the isomerase reaction, S2AL is rearranged via a Mg-dependent methyl migration to produce 3-hydroxy-3-methyl-2-ketobutyrate (HMKB). In the reductase reaction, this 2-ketoacid undergoes a metal-dependent reduction by NADPH to yield (R)-2,3-dihydroxy-isovalerate. This Streptococcus thermophilus (strain CNRZ 1066) protein is Ketol-acid reductoisomerase (NADP(+)).